We begin with the raw amino-acid sequence, 405 residues long: tRNA-specific 2-thiouridylase MnmA (405 aa).

Residues 41–48 (AMSGGVDS) and Leu67 each bind ATP. Residue Cys135 is the Nucleophile of the active site. Cys135 and Cys231 are oxidised to a cystine. Gly159 contacts ATP. The segment at 181-183 (KDQ) is interaction with tRNA. Catalysis depends on Cys231, which acts as the Cysteine persulfide intermediate.

The protein belongs to the MnmA/TRMU family.

Its subcellular location is the cytoplasm. It carries out the reaction S-sulfanyl-L-cysteinyl-[protein] + uridine(34) in tRNA + AH2 + ATP = 2-thiouridine(34) in tRNA + L-cysteinyl-[protein] + A + AMP + diphosphate + H(+). Its function is as follows. Catalyzes the 2-thiolation of uridine at the wobble position (U34) of tRNA, leading to the formation of s(2)U34. The polypeptide is tRNA-specific 2-thiouridylase MnmA (Maricaulis maris (strain MCS10) (Caulobacter maris)).